Reading from the N-terminus, the 131-residue chain is Small ribosomal subunit protein uS8 (131 aa).

This sequence belongs to the universal ribosomal protein uS8 family. Part of the 30S ribosomal subunit. Contacts proteins S5 and S12.

Its function is as follows. One of the primary rRNA binding proteins, it binds directly to 16S rRNA central domain where it helps coordinate assembly of the platform of the 30S subunit. This chain is Small ribosomal subunit protein uS8, found in Halorhodospira halophila (strain DSM 244 / SL1) (Ectothiorhodospira halophila (strain DSM 244 / SL1)).